We begin with the raw amino-acid sequence, 726 residues long: Cyclic nucleotide-gated ion channel 2 (726 aa).

The Cytoplasmic portion of the chain corresponds to 1-127 (MPSHPNFIFR…SKRVQRWNRA (127 aa)). Positions 26–46 (IDENSNLQINGGDSSSSGSDE) are disordered. The span at 36–45 (GGDSSSSGSD) shows a compositional bias: low complexity. The helical transmembrane segment at 128–148 (LLLARGMALAVDPLFFYALSI) threads the bilayer. The Extracellular portion of the chain corresponds to 149-162 (GRTTGPACLYMDGA). Residues 163–183 (FAAVVTVLRTCLDAVHLWHVW) traverse the membrane as a helical segment. Residues 184 to 219 (LQFRLAYVSRESLVVGCGKLVWDPRAIASHYARSLT) are Cytoplasmic-facing. Residues 220–240 (GFWFDVIVILPVPQAVFWLVV) form a helical membrane-spanning segment. At 241–254 (PKLIREEKVKLIMT) the chain is on the extracellular side. The helical transmembrane segment at 255 to 275 (ILLLIFLFQFLPKIYHCICLM) threads the bilayer. At 276–282 (RRMQKVT) the chain is on the cytoplasmic side. A helical membrane pass occupies residues 283-303 (GYIFGTIWWGFALNLIAYFIA). The Extracellular segment spans residues 304–424 (SHVAGGCWYV…ANDLEPTSNW (121 aa)). Residues 425-445 (LEVIFSIVMVLSGLLLFTLLI) form a helical membrane-spanning segment. Topologically, residues 446–726 (GNIQVFLHAV…MSIRPHDHLE (281 aa)) are cytoplasmic. Residues 531 to 661 (LFRG…ARYY) and Asp600 each bind a nucleoside 3',5'-cyclic phosphate. The tract at residues 645–661 (FRYKFANERLKRTARYY) is calmodulin-binding. One can recognise an IQ domain in the interval 666–695 (RTWAAVNIQMAWRRRRKRTRGENIGGSMSP).

This sequence belongs to the cyclic nucleotide-gated cation channel (TC 1.A.1.5) family. In terms of assembly, homotetramer or heterotetramer (Potential). Binds calmodulin-1/4 with a higher affinity than calmodulin-2/3/5. Expressed in the whole plant but only weakly in roots. Strongly expressed in the expanded cotyledons of 14-day-old seedlings and detected later in leaves after the transition to flowering. Also detected in flowers during organ senescence and in the dehiscence zone of siliques.

The protein resides in the cell membrane. Its function is as follows. Acts as a cyclic nucleotide-gated ion channel. Permeable to potassium and calcium in a cyclic nucleotide-dependent fashion (cAMP or cGMP). Could also transport lithium, cesium and rubium and displays a strong selectivity against sodium. Seems to directly participate in pathogen-induced calcium influx. May function in homeostasis, re-establishing ionic balance after defense action and/or other stimuli. Could mediate the initiation of the developmentally regulated cell death programs. The protein is Cyclic nucleotide-gated ion channel 2 (CNGC2) of Arabidopsis thaliana (Mouse-ear cress).